A 912-amino-acid polypeptide reads, in one-letter code: DNA ligase 4 (912 aa).

ATP contacts are provided by glutamate 276, threonine 277, lysine 278, leucine 279, arginine 283, glutamate 336, lysine 350, phenylalanine 372, glutamate 432, lysine 437, lysine 454, and lysine 456. The active-site N6-AMP-lysine intermediate is the lysine 278. Glutamate 336 serves as a coordination point for Mg(2+). Glutamate 432 is a binding site for Mg(2+). Residues 615–625 (LASKHLYIDEY) are required for catalytic activity. BRCT domains lie at 659 to 748 (KVSS…PAFM) and 809 to 912 (CKLC…QFLI).

Belongs to the ATP-dependent DNA ligase family. Interacts with XRCC4; the LIG4-XRCC4 subcomplex has a 1:2 stoichiometry. Component of the core long-range non-homologous end joining (NHEJ) complex (also named DNA-PK complex) composed of PRKDC, LIG4, XRCC4, XRCC6/Ku70, XRCC5/Ku86 and NHEJ1/XLF. Additional component of the NHEJ complex includes PAXX. Following autophosphorylation, PRKDC dissociates from DNA, leading to formation of the short-range NHEJ complex, composed of LIG4, XRCC4, XRCC6/Ku70, XRCC5/Ku86 and NHEJ1/XLF. The cofactor is Mg(2+).

Its subcellular location is the nucleus. The catalysed reaction is ATP + (deoxyribonucleotide)n-3'-hydroxyl + 5'-phospho-(deoxyribonucleotide)m = (deoxyribonucleotide)n+m + AMP + diphosphate.. In terms of biological role, DNA ligase involved in DNA non-homologous end joining (NHEJ); required for double-strand break (DSB) repair and V(D)J recombination. Catalyzes the NHEJ ligation step of the broken DNA during DSB repair by resealing the DNA breaks after the gap filling is completed. Joins single-strand breaks in a double-stranded polydeoxynucleotide in an ATP-dependent reaction. LIG4 is mechanistically flexible: it can ligate nicks as well as compatible DNA overhangs alone, while in the presence of XRCC4, it can ligate ends with 2-nucleotides (nt) microhomology and 1-nt gaps. Forms a subcomplex with XRCC4; the LIG4-XRCC4 subcomplex is responsible for the NHEJ ligation step and XRCC4 enhances the joining activity of LIG4. This is DNA ligase 4 from Gallus gallus (Chicken).